Consider the following 983-residue polypeptide: Type IV secretion system protein CagE (983 aa).

Position 597 to 604 (597 to 604 (GSTGSGKT)) interacts with ATP.

Belongs to the TrbE/VirB4 family. As to quaternary structure, component of the Cag type IV secretion system, which is composed of a wheel-shaped outer membrane complex (OMC) and an inner membrane complex (IMC). Interacts with CagV and CagBeta.

It localises to the cell inner membrane. It catalyses the reaction ATP + H2O + cellular proteinSide 1 = ADP + phosphate + cellular proteinSide 2.. In terms of biological role, ATPase component of the type IV secretion system Cag (Cag-T4SS). Acts as a molecular motor to provide the energy that is required for the export of proteins. Required for CagA translocation and induction of IL-8 in host gastric epithelial cells. Plays a key role in Cag-T4SS pilus biogenesis, especially in the localization and stabilization of the pilus-associated components CagI, CagL and the surface protein CagH. Is also critical for assembly of the entire cytoplasmic portion of the Cag inner membrane complex (IMC). The chain is Type IV secretion system protein CagE from Helicobacter pylori (strain ATCC 700392 / 26695) (Campylobacter pylori).